We begin with the raw amino-acid sequence, 196 residues long: Carnitine operon protein CaiE (196 aa).

The segment at 177–196 (RQMEENRPRLQGTTDVMPKR) is disordered.

This sequence belongs to the transferase hexapeptide repeat family.

The protein operates within amine and polyamine metabolism; carnitine metabolism. Overproduction of CaiE stimulates the activity of CaiB and CaiD. The protein is Carnitine operon protein CaiE of Escherichia coli O17:K52:H18 (strain UMN026 / ExPEC).